The primary structure comprises 228 residues: Cytidylate kinase (228 aa).

12 to 20 (GPSGAGKGT) lines the ATP pocket.

This sequence belongs to the cytidylate kinase family. Type 1 subfamily.

The protein resides in the cytoplasm. The catalysed reaction is CMP + ATP = CDP + ADP. The enzyme catalyses dCMP + ATP = dCDP + ADP. This is Cytidylate kinase from Photobacterium profundum (strain SS9).